The primary structure comprises 188 residues: Peptidyl-prolyl cis-trans isomerase (188 aa).

The N-terminal stretch at Met1 to Ala20 is a signal peptide. In terms of domain architecture, PPIase cyclophilin-type spans Asn21 to Ile181.

Belongs to the cyclophilin-type PPIase family.

It localises to the periplasm. It catalyses the reaction [protein]-peptidylproline (omega=180) = [protein]-peptidylproline (omega=0). Its function is as follows. PPIases accelerate the folding of proteins. It catalyzes the cis-trans isomerization of proline imidic peptide bonds in oligopeptides. This protein is not essential for growth. Presumably plays a role in signal transduction. In Acinetobacter baylyi (strain ATCC 33305 / BD413 / ADP1), this protein is Peptidyl-prolyl cis-trans isomerase (rotA).